Consider the following 513-residue polypeptide: ATP synthase subunit alpha (513 aa).

ATP is bound at residue 169 to 176 (GDRQTGKT).

This sequence belongs to the ATPase alpha/beta chains family. As to quaternary structure, F-type ATPases have 2 components, CF(1) - the catalytic core - and CF(0) - the membrane proton channel. CF(1) has five subunits: alpha(3), beta(3), gamma(1), delta(1), epsilon(1). CF(0) has three main subunits: a(1), b(2) and c(9-12). The alpha and beta chains form an alternating ring which encloses part of the gamma chain. CF(1) is attached to CF(0) by a central stalk formed by the gamma and epsilon chains, while a peripheral stalk is formed by the delta and b chains.

The protein resides in the cell inner membrane. The enzyme catalyses ATP + H2O + 4 H(+)(in) = ADP + phosphate + 5 H(+)(out). Functionally, produces ATP from ADP in the presence of a proton gradient across the membrane. The alpha chain is a regulatory subunit. This Actinobacillus pleuropneumoniae serotype 7 (strain AP76) protein is ATP synthase subunit alpha.